A 505-amino-acid polypeptide reads, in one-letter code: Folate transporter 1 (505 aa).

Transmembrane regions (helical) follow at residues 58-78, 89-109, 122-142, and 146-166; these read SLIAMLQGVEVLCNLSIIYLL, LSIVMCFIKIPWSIKLVWAVI, YYLLLGSFLCILSLICLGLIT, and LFITILLLFIYFFGSSLCNVI. 3 N-linked (GlcNAc...) asparagine glycosylation sites follow: asparagine 177, asparagine 181, and asparagine 186. 2 helical membrane-spanning segments follow: residues 192–212 and 216–236; these read AFRKLSFAIMSYLSGYLLLLI and HIFLIGSFLPICVFTSGFFII. Asparagine 240 is a glycosylation site (N-linked (GlcNAc...) asparagine). A run of 5 helical transmembrane segments spans residues 266–286, 300–320, 326–346, 352–372, and 405–425; these read IIFIFIMMSTPSCGNTLFFYI, MAMFQSLASFISIISYMLFFT, KLLLYSTIIITPFCLLPLVVI, FLFIPNTLFFITDTVLIEFIA, and FASIISSFLSSLLTYSLNITS. Residue asparagine 427 is glycosylated (N-linked (GlcNAc...) asparagine). A helical transmembrane segment spans residues 431-451; it reads LPYMIIICCLTNIIPIFFLYI. Asparagine 454 carries N-linked (GlcNAc...) asparagine glycosylation.

This sequence belongs to the major facilitator superfamily. Folate-biopterin transporter (TC 2.A.71) family.

The protein localises to the cell membrane. The catalysed reaction is folate(in) + H(+)(in) = folate(out) + H(+)(out). Transport of folates is inhibited by probenecid and methotrexate. In terms of biological role, folate transporter with broad substrate specificity. Transports folic acid, folinic acid, pteroic acid, dihydropteroic acid, the folate precursor p-amino benzoic acid (pABA) and the human folate catabolite pABA monoglutamate. The polypeptide is Folate transporter 1 (Plasmodium falciparum (isolate 3D7)).